Reading from the N-terminus, the 518-residue chain is Cytochrome P450 monooxygenase atnE (518 aa).

The chain crosses the membrane as a helical span at residues 11–31; it reads FLAAFAVWMGVVVLAFAIFCV. N-linked (GlcNAc...) asparagine glycosylation is present at Asn-184. A heme-binding site is contributed by Cys-458.

It belongs to the cytochrome P450 family. It depends on heme as a cofactor.

The protein localises to the membrane. It functions in the pathway secondary metabolite biosynthesis. Functionally, cytochrome P450 monooxygenase; part of the gene cluster that mediates the biosynthesis of aspercryptins, linear lipopeptides built from six amino acids including 2 highly unusual and nonproteogenic amino acids, 2-amino-octanoic acid (2aoa) and 2-amino-dodecanol (2adol). The core structure of aspercryptins is as follows: Ser/Ala-Thr-Ile/Val-2aoa-Asn-2adol. The first step of aspercryptin biosynthesis is the generation of the fatty acid precursors, octanoic and dodecanoic acids, by the FAS subunits atnF and atnM. The fatty acid precursors are likely transformed into the corresponding alpha-amino fatty acids in three steps. First, they are hydroxylated by the cytochrome P450 monooxygenase atnE, then oxidized to the corresponding alpha-keto acids by the NAD(P)-dependent oxidoreductase atnD, and finally converted to the alpha-amino fatty acids by the PLP-dependent aminotransferases atnH or atnJ. the alpha-amino fatty acids, 2-amino-octanoic and 2-amino-dodecanoic acids, are recognized, activated, and covalently tethered to the NRPS atnA by its fourth and sixth adenylation domains. The second module of atnA is the Thr module and contains an epimerase (E) domain responsible for the epimerization of Thr to D-allo-Thr. Additionally, despite atnA having only one epimerase domain, the first amino acid of aspercryptin A1 is D-Ser, suggesting that serine is either loaded directly as D-Ser on the first module or that the epimerase domain in the threonine module epimerizes both L-Ser and L-Thr. After condensation of the hexapeptide of aspercryptin, the C-terminal reductase (TE) domain might be involved in the reductive release and production of the aldehyde hexapeptide. Further reduction would generate aspercryptins. The variety of aspercryptins produced reflects the flexibility of the atnA NRPS, allowing incorporation of alanine instead of serine, valine for isoleucine, and a C10 fatty amino alcohol instead of the C12 version. AtnB seems to be involved in the selectivity for Ile versus Val by the third module. Moreover, type B, C and D aspercryptins have an additional N-terminal cichorine, acetyl and propionyl group respectively. The polypeptide is Cytochrome P450 monooxygenase atnE (Emericella nidulans (strain FGSC A4 / ATCC 38163 / CBS 112.46 / NRRL 194 / M139) (Aspergillus nidulans)).